The following is a 410-amino-acid chain: MLRDTLKKAEKAREKKALYGEDIDLEKFIKEEAGEHEEVTRAKEVPKEVQETLLRVGVDPEERERAGTFIQVDQSGICTTCASESIEIMGMNVALDKYSWLKDYMWKAVAVDTDKYTATTALREAEGEMGGYFIRSKPGAREVFPLQACMFIGDERVMQTAHNIVIAEENSELHIITGCATGEDVSSALHVGVSEFYLKKGARITFTMVHNWAEQVEVRPRTGIMVGDDATYINNYILTSPVKSIQSYPTAYCTGENSRVVFQSILGGQKDSVLDMGSRVILEGRGSSAEMVSRAVSKDSSQIYSRGHLAGRVPEVKGHLECHGLVLSDDSMIYAVPELEGSATELEMSHEAAVGKIAEEEVMYLTSRGLTEEEAASMIVRGFLSMDITGLPPELAAETKRMLDMSLKGM.

It belongs to the iron-sulfur cluster assembly SufBD family.

This Methanothermobacter thermautotrophicus (strain ATCC 29096 / DSM 1053 / JCM 10044 / NBRC 100330 / Delta H) (Methanobacterium thermoautotrophicum) protein is Iron-sulfur cluster assembly SufBD family protein MTH_1150.